We begin with the raw amino-acid sequence, 630 residues long: 1,4-alpha-glucan branching enzyme GlgB (630 aa).

The active-site Nucleophile is Asp308. Glu361 functions as the Proton donor in the catalytic mechanism.

It belongs to the glycosyl hydrolase 13 family. GlgB subfamily. Monomer.

It catalyses the reaction Transfers a segment of a (1-&gt;4)-alpha-D-glucan chain to a primary hydroxy group in a similar glucan chain.. The protein operates within glycan biosynthesis; glycogen biosynthesis. Catalyzes the formation of the alpha-1,6-glucosidic linkages in glycogen by scission of a 1,4-alpha-linked oligosaccharide from growing alpha-1,4-glucan chains and the subsequent attachment of the oligosaccharide to the alpha-1,6 position. The chain is 1,4-alpha-glucan branching enzyme GlgB from Halothermothrix orenii (strain H 168 / OCM 544 / DSM 9562).